A 497-amino-acid polypeptide reads, in one-letter code: Cytochrome P450 26A1 (497 aa).

C442 serves as a coordination point for heme.

Belongs to the cytochrome P450 family. The cofactor is heme.

The protein resides in the endoplasmic reticulum membrane. It localises to the microsome membrane. It catalyses the reaction all-trans-retinoate + reduced [NADPH--hemoprotein reductase] + O2 = all-trans-(4S)-hydroxyretinoate + oxidized [NADPH--hemoprotein reductase] + H2O + H(+). The catalysed reaction is all-trans-(4S)-hydroxyretinoate + reduced [NADPH--hemoprotein reductase] + O2 = all-trans-(4S,16)-dihydroxyretinoate + oxidized [NADPH--hemoprotein reductase] + H2O + H(+). The enzyme catalyses all-trans-retinoate + reduced [NADPH--hemoprotein reductase] + O2 = all-trans-18-hydroxyretinoate + oxidized [NADPH--hemoprotein reductase] + H2O + H(+). Its function is as follows. A cytochrome P450 monooxygenase involved in the metabolism of retinoates (RAs), the active metabolites of vitamin A, and critical signaling molecules in animals. RAs exist as at least four different isomers: all-trans-RA (atRA), 9-cis-RA, 13-cis-RA, and 9,13-dicis-RA, where atRA is considered to be the biologically active isomer, although 9-cis-RA and 13-cis-RA also have activity. Catalyzes the hydroxylation of atRA primarily at C-4 and C-18, thereby contributing to the regulation of atRA homeostasis and signaling. Hydroxylation of atRA limits its biological activity and initiates a degradative process leading to its eventual elimination. Involved in the convertion of atRA to all-trans-4-oxo-RA. Able to metabolize other RAs such as 9-cis, 13-cis and 9,13-di-cis RA. Can oxidize all-trans-13,14-dihydroretinoate (DRA) to metabolites which could include all-trans-4-oxo-DRA, all-trans-4-hydroxy-DRA, all-trans-5,8-epoxy-DRA, and all-trans-18-hydroxy-DRA. May play a role in the oxidative metabolism of xenobiotics such as tazarotenic acid. This chain is Cytochrome P450 26A1, found in Mus musculus (Mouse).